Reading from the N-terminus, the 195-residue chain is Adenylate kinase (195 aa).

G8 to T16 lines the ATP pocket.

This sequence belongs to the archaeal adenylate kinase family.

Its subcellular location is the cytoplasm. It catalyses the reaction AMP + ATP = 2 ADP. The protein is Adenylate kinase of Saccharolobus islandicus (strain M.14.25 / Kamchatka #1) (Sulfolobus islandicus).